Reading from the N-terminus, the 57-residue chain is Large ribosomal subunit protein bL32A (57 aa).

Residues 1–22 (MAVPARRTSKTKKRLRRTHEKL) form a disordered region. The span at 7–20 (RTSKTKKRLRRTHE) shows a compositional bias: basic residues.

It belongs to the bacterial ribosomal protein bL32 family.

This chain is Large ribosomal subunit protein bL32A (rpmF1), found in Enterococcus faecalis (strain ATCC 700802 / V583).